The following is a 95-amino-acid chain: Small ribosomal subunit protein uS19 (95 aa).

The interval 76–95 (PTRTFRGHGGKKADKRGKLK) is disordered. Residues 80–95 (FRGHGGKKADKRGKLK) are compositionally biased toward basic residues.

This sequence belongs to the universal ribosomal protein uS19 family.

In terms of biological role, protein S19 forms a complex with S13 that binds strongly to the 16S ribosomal RNA. In Herpetosiphon aurantiacus (strain ATCC 23779 / DSM 785 / 114-95), this protein is Small ribosomal subunit protein uS19.